The following is a 1141-amino-acid chain: Envelopment polyprotein (1141 aa).

The first 18 residues, 1–18 (MGRLYLIVLGVLITATAG), serve as a signal peptide directing secretion. The Lumenal segment spans residues 19–483 (FPRSVHELKI…HSLAVELCVP (465 aa)). 10 disulfide bridges follow: cysteine 30–cysteine 158, cysteine 64–cysteine 164, cysteine 113–cysteine 135, cysteine 140–cysteine 145, cysteine 182–cysteine 192, cysteine 217–cysteine 253, cysteine 242–cysteine 357, cysteine 382–cysteine 441, cysteine 386–cysteine 395, and cysteine 458–cysteine 481. N-linked (GlcNAc...) asparagine; by host glycosylation occurs at asparagine 141. N-linked (GlcNAc...) asparagine; by host glycosylation occurs at asparagine 353. Asparagine 405 carries an N-linked (GlcNAc...) asparagine; by host glycan. Residues 484–506 (GIHGWATIALVITFCFGWLLIPT) traverse the membrane as a helical segment. Residues 507 to 633 (TTMVVLKCLR…LGVFRYKSRC (127 aa)) are Cytoplasmic-facing. Residues 522-539 (CSHYSTESKFKVILEKVK) are binding to the ribonucleoprotein. 2 consecutive CCHC-type zinc fingers follow at residues 551–571 (CDICHHECETAKELESHKKSC) and 576–597 (CPYCMTITEATESALQAHYAVC). Binding to the ribonucleoprotein stretches follow at residues 594-611 (YAVCKLTGRFHEALKKSL), 598-609 (KLTGRFHEALKK), and 617-631 (QRGCYRTLGVFRYKS). The region spanning 617–640 (QRGCYRTLGVFRYKSRCYVGLVWM) is the ITAM domain. Phosphotyrosine occurs at positions 621 and 634. The short motif at 621–624 (YRTL) is the YxxL element. The chain crosses the membrane as a helical span at residues 634–654 (YVGLVWMCLLTLELIVWAASA). Residues 655–1110 (DTPLLEPGWS…EWLLGILNGN (456 aa)) are Lumenal-facing. Intrachain disulfides connect cysteine 741-cysteine 776, cysteine 745-cysteine 783, cysteine 757-cysteine 890, cysteine 771-cysteine 901, cysteine 786-cysteine 909, cysteine 812-cysteine 821, cysteine 829-cysteine 838, and cysteine 869-cysteine 873. The tract at residues 763–783 (YQYETSWSCNPPDCPGVGTGC) is fusion loop. N-linked (GlcNAc...) asparagine; by host glycosylation is present at asparagine 933. Disulfide bonds link cysteine 975-cysteine 1005, cysteine 998-cysteine 1050, cysteine 1015-cysteine 1020, cysteine 1051-cysteine 1056, and cysteine 1090-cysteine 1094. Residues 1111 to 1131 (WVVVAVLVIILLISIFLFSFF) traverse the membrane as a helical segment. The segment at 1127–1141 (LFSFFCPIRSHKKQL) is binding to the ribonucleoprotein. Topologically, residues 1132 to 1141 (CPIRSHKKQL) are cytoplasmic.

It belongs to the hantavirus envelope glycoprotein family. Homodimer. Homotetramer; forms heterotetrameric Gn-Gc spikes in the pre-fusion conformation. Interacts (via C-terminus) with the nucleoprotein. Interacts with host TUFM; this interaction contributes to the virus-induced degradation of mitochondria by autophagy, which leads to degradation of host MAVS and inhibition of type I interferon (IFN) responses. Interacts with host MAP1LC3B; this interaction contributes to the virus-induced degradation of mitochondria by autophagy, which leads to degradation of host MAVS and inhibition of type I interferon (IFN) responses. In terms of assembly, homodimer. Homotetramer; forms heterotetrameric Gn-Gc spikes in the pre-fusion conformation. Homotrimer; forms homotrimer in the post-fusion conformation at acidic pH. Interacts (via C-terminus) with the nucleoprotein. Envelope polyprotein precursor is quickly cleaved in vivo just after synthesis, presumably by host signal peptidase.

It is found in the virion membrane. It localises to the host cell surface. Its subcellular location is the host Golgi apparatus membrane. The protein localises to the host endoplasmic reticulum membrane. The protein resides in the host mitochondrion. Functionally, forms homotetramers with glycoprotein C at the surface of the virion. Attaches the virion to host cell receptors including integrin ITGAV/ITGB3. This attachment induces virion internalization predominantly through clathrin-dependent endocytosis. Mediates the assembly and budding of infectious virus particles through its interaction with the nucleocapsid protein and the viral genome. May dysregulate normal immune and endothelial cell responses through an ITAM motif. Translocates to mitochondria, binds to host TUFM and recruits MAP1LC3B. These interactions induce mitochondrial autophagy and therefore destruction of host MAVS leading to inhibition of type I interferon (IFN) responses. Concomitant breakdown of glycoprotein N is apparently prevented by the nucleoprotein that may inhibit Gn-stimulated autophagosome-lysosome fusion. Interacts with the viral genomic RNA. Its function is as follows. Forms homotetramers with glycoprotein N at the surface of the virion. Attaches the virion to host cell receptors including integrin ITGAV/ITGB3. This attachment induces virion internalization predominantly through clathrin-dependent endocytosis. Class II fusion protein that promotes fusion of viral membrane with host endosomal membrane after endocytosis of the virion. In Homo sapiens (Human), this protein is Envelopment polyprotein (GP).